Consider the following 245-residue polypeptide: Carbohydrate deacetylase 1 (245 aa).

Mg(2+) is bound by residues His-59 and His-125.

The protein belongs to the YdjC deacetylase family. In terms of assembly, homodimer. The cofactor is Mg(2+).

In terms of biological role, probably catalyzes the deacetylation of acetylated carbohydrates an important step in the degradation of oligosaccharides. The protein is Carbohydrate deacetylase 1 of Listeria innocua serovar 6a (strain ATCC BAA-680 / CLIP 11262).